Consider the following 466-residue polypeptide: Ribulose bisphosphate carboxylase large chain (466 aa).

N6,N6,N6-trimethyllysine is present on K4. 2 residues coordinate substrate: N113 and T163. K165 (proton acceptor) is an active-site residue. K167 is a binding site for substrate. Residues K191, D193, and E194 each coordinate Mg(2+). Residue K191 is modified to N6-carboxylysine. H284 functions as the Proton acceptor in the catalytic mechanism. Residues R285, H317, and S369 each coordinate substrate.

It belongs to the RuBisCO large chain family. Type I subfamily. As to quaternary structure, heterohexadecamer of 8 large chains and 8 small chains; disulfide-linked. The disulfide link is formed within the large subunit homodimers. Mg(2+) is required as a cofactor. Post-translationally, the disulfide bond which can form in the large chain dimeric partners within the hexadecamer appears to be associated with oxidative stress and protein turnover.

It localises to the plastid. Its subcellular location is the chloroplast. The enzyme catalyses 2 (2R)-3-phosphoglycerate + 2 H(+) = D-ribulose 1,5-bisphosphate + CO2 + H2O. It catalyses the reaction D-ribulose 1,5-bisphosphate + O2 = 2-phosphoglycolate + (2R)-3-phosphoglycerate + 2 H(+). In terms of biological role, ruBisCO catalyzes two reactions: the carboxylation of D-ribulose 1,5-bisphosphate, the primary event in carbon dioxide fixation, as well as the oxidative fragmentation of the pentose substrate in the photorespiration process. Both reactions occur simultaneously and in competition at the same active site. This is Ribulose bisphosphate carboxylase large chain from Ruttya fruticosa (African azalea).